The chain runs to 153 residues: UPF0743 protein YCR087C-A (153 aa).

2 consecutive C2HC LYAR-type zinc fingers follow at residues 1-26 and 27-52; these read MVTF…YRCP and NAYY…TSCI. Cys-6, Cys-9, His-21, Cys-25, Cys-32, Cys-35, His-48, and Cys-51 together coordinate Zn(2+). The segment at 63-96 is disordered; it reads YKGNKKQKQKQQQKQQQKQHQHQPVATPAKKVEK. Over residues 65–83 the composition is skewed to basic residues; it reads GNKKQKQKQQQKQQQKQHQ.

Belongs to the UPF0743 family.

Its subcellular location is the nucleus. It is found in the nucleolus. This chain is UPF0743 protein YCR087C-A, found in Saccharomyces cerevisiae (strain ATCC 204508 / S288c) (Baker's yeast).